The chain runs to 736 residues: Myotubularin-related protein 12 (736 aa).

In terms of domain architecture, Myotubularin phosphatase spans 182–558 (YLRSTNPEML…RQLSLPSSAF (377 aa)). Residues 672-691 (SLATQPDHPPPLHHRLPSFG) form a disordered region.

It belongs to the protein-tyrosine phosphatase family. Non-receptor class myotubularin subfamily. As to quaternary structure, heterodimer with lipid phosphatase mtm1. In skeletal muscles, the interaction stabilizes both mtmr12 and mtm1 protein levels.

The protein localises to the cytoplasm. It is found in the sarcoplasmic reticulum. It localises to the myofibril. The protein resides in the sarcomere. Acts as an adapter for the myotubularin phosphatase mtm1 to regulate mtm1 protein stability and possibly its intracellular location. By stabilizing mtm1 protein levels, required for skeletal muscle maintenance but not for myogenesis. In skeletal muscle cells, does not regulate mtm1 subcellular localization. The polypeptide is Myotubularin-related protein 12 (mtmr12) (Danio rerio (Zebrafish)).